Here is a 367-residue protein sequence, read N- to C-terminus: tRNA-specific 2-thiouridylase MnmA (367 aa).

Residues A6–S13 and M32 contribute to the ATP site. C101 functions as the Nucleophile in the catalytic mechanism. C101 and C193 form a disulfide bridge. G125 is a binding site for ATP. The interaction with tRNA stretch occupies residues K143–Q145. The active-site Cysteine persulfide intermediate is the C193.

Belongs to the MnmA/TRMU family.

It localises to the cytoplasm. It carries out the reaction S-sulfanyl-L-cysteinyl-[protein] + uridine(34) in tRNA + AH2 + ATP = 2-thiouridine(34) in tRNA + L-cysteinyl-[protein] + A + AMP + diphosphate + H(+). Its function is as follows. Catalyzes the 2-thiolation of uridine at the wobble position (U34) of tRNA, leading to the formation of s(2)U34. The polypeptide is tRNA-specific 2-thiouridylase MnmA (Mycobacterium tuberculosis (strain CDC 1551 / Oshkosh)).